The following is a 520-amino-acid chain: Probable glycerol-3-phosphate acyltransferase 3 (520 aa).

5 helical membrane passes run 5-20 (ISIFQALVFLFYRFIL), 64-84 (YFMLVAFEAGGVIRSFLLFIL), 88-108 (ISLMSHEMGVKVMVMVSFFGI), 264-284 (TLMNTLVLFMWGPFAAAAAAA), and 286-306 (LFVSLCIPYSLSIPILAFSGC). An HXXXXD motif motif is present at residues 334 to 339 (HRTLLD).

Belongs to the GPAT/DAPAT family. As to expression, widely expressed at low level. Expressed at higher level in seedlings and leaves.

It is found in the membrane. It catalyses the reaction sn-glycerol 3-phosphate + an acyl-CoA = a 1-acyl-sn-glycero-3-phosphate + CoA. It participates in phospholipid metabolism; CDP-diacylglycerol biosynthesis; CDP-diacylglycerol from sn-glycerol 3-phosphate: step 1/3. Functionally, esterifies acyl-group from acyl-ACP to the sn-1 position of glycerol-3-phosphate, an essential step in glycerolipid biosynthesis. The chain is Probable glycerol-3-phosphate acyltransferase 3 (GPAT3) from Arabidopsis thaliana (Mouse-ear cress).